Here is a 185-residue protein sequence, read N- to C-terminus: Ribosome-recycling factor (185 aa).

It belongs to the RRF family.

It is found in the cytoplasm. Responsible for the release of ribosomes from messenger RNA at the termination of protein biosynthesis. May increase the efficiency of translation by recycling ribosomes from one round of translation to another. The protein is Ribosome-recycling factor of Vibrio vulnificus (strain YJ016).